The sequence spans 75 residues: U6-lycotoxin-Ls1h (75 aa).

The signal sequence occupies residues 1–21; that stretch reads MKLLLFTALVLVVISLIEVEA. Residues 22–25 constitute a propeptide that is removed on maturation; it reads ENER.

This sequence belongs to the neurotoxin 19 (CSTX) family. 06 (U6-Lctx) subfamily. Post-translationally, contains 4 disulfide bonds. In terms of tissue distribution, expressed by the venom gland.

It is found in the secreted. In Lycosa singoriensis (Wolf spider), this protein is U6-lycotoxin-Ls1h.